The primary structure comprises 264 residues: Thiazole synthase (264 aa).

Lys-100 acts as the Schiff-base intermediate with DXP in catalysis. 1-deoxy-D-xylulose 5-phosphate is bound by residues Gly-161, 187–188, and 209–210; these read AG and NT.

This sequence belongs to the ThiG family. In terms of assembly, homotetramer. Forms heterodimers with either ThiH or ThiS.

Its subcellular location is the cytoplasm. It carries out the reaction [ThiS sulfur-carrier protein]-C-terminal-Gly-aminoethanethioate + 2-iminoacetate + 1-deoxy-D-xylulose 5-phosphate = [ThiS sulfur-carrier protein]-C-terminal Gly-Gly + 2-[(2R,5Z)-2-carboxy-4-methylthiazol-5(2H)-ylidene]ethyl phosphate + 2 H2O + H(+). It functions in the pathway cofactor biosynthesis; thiamine diphosphate biosynthesis. Catalyzes the rearrangement of 1-deoxy-D-xylulose 5-phosphate (DXP) to produce the thiazole phosphate moiety of thiamine. Sulfur is provided by the thiocarboxylate moiety of the carrier protein ThiS. In vitro, sulfur can be provided by H(2)S. This chain is Thiazole synthase, found in Nitrosospira multiformis (strain ATCC 25196 / NCIMB 11849 / C 71).